We begin with the raw amino-acid sequence, 306 residues long: Acetyl-coenzyme A carboxylase carboxyl transferase subunit beta (306 aa).

Residues L25–T294 enclose the CoA carboxyltransferase N-terminal domain. Residues V286–A306 form a disordered region. The segment covering N287–P299 has biased composition (polar residues).

Belongs to the AccD/PCCB family. In terms of assembly, acetyl-CoA carboxylase is a heterohexamer composed of biotin carboxyl carrier protein (AccB), biotin carboxylase (AccC) and two subunits each of ACCase subunit alpha (AccA) and ACCase subunit beta (AccD).

It localises to the cytoplasm. It catalyses the reaction N(6)-carboxybiotinyl-L-lysyl-[protein] + acetyl-CoA = N(6)-biotinyl-L-lysyl-[protein] + malonyl-CoA. The protein operates within lipid metabolism; malonyl-CoA biosynthesis; malonyl-CoA from acetyl-CoA: step 1/1. Functionally, component of the acetyl coenzyme A carboxylase (ACC) complex. Biotin carboxylase (BC) catalyzes the carboxylation of biotin on its carrier protein (BCCP) and then the CO(2) group is transferred by the transcarboxylase to acetyl-CoA to form malonyl-CoA. In Bartonella quintana (strain Toulouse) (Rochalimaea quintana), this protein is Acetyl-coenzyme A carboxylase carboxyl transferase subunit beta.